The sequence spans 99 residues: NAD(P)H-quinone oxidoreductase subunit 4L, chloroplastic (99 aa).

3 helical membrane passes run 1–21, 31–51, and 59–79; these read MFEQGLILSAYLLCVGFFGLI, MSLELIFNAITLNFITLSNLF, and IFTLFVIAVAAAEAATGLAIA.

This sequence belongs to the complex I subunit 4L family. As to quaternary structure, NDH is composed of at least 16 different subunits, 5 of which are encoded in the nucleus.

The protein resides in the plastid. It localises to the chloroplast thylakoid membrane. It carries out the reaction a plastoquinone + NADH + (n+1) H(+)(in) = a plastoquinol + NAD(+) + n H(+)(out). The enzyme catalyses a plastoquinone + NADPH + (n+1) H(+)(in) = a plastoquinol + NADP(+) + n H(+)(out). NDH shuttles electrons from NAD(P)H:plastoquinone, via FMN and iron-sulfur (Fe-S) centers, to quinones in the photosynthetic chain and possibly in a chloroplast respiratory chain. The immediate electron acceptor for the enzyme in this species is believed to be plastoquinone. Couples the redox reaction to proton translocation, and thus conserves the redox energy in a proton gradient. This chain is NAD(P)H-quinone oxidoreductase subunit 4L, chloroplastic, found in Adiantum capillus-veneris (Maidenhair fern).